A 139-amino-acid chain; its full sequence is uncharacterized protein (139 aa).

An N-terminal signal peptide occupies residues Met1–Gly32. Residues Ser44 to Glu139 enclose the sHSP domain.

It belongs to the small heat shock protein (HSP20) family.

This is an uncharacterized protein from Bacillus subtilis (strain 168).